A 601-amino-acid chain; its full sequence is Terpenoid synthase 17 (601 aa).

Asn354, Asp358, Asn497, Thr501, and Glu505 together coordinate Mg(2+). The short motif at 354–358 (NDTCD) is the DDXXD motif; degenerate element.

The protein belongs to the terpene synthase family. Tpsa subfamily. Mg(2+) is required as a cofactor. The cofactor is Mn(2+). In terms of tissue distribution, expressed exclusively in flowers.

It localises to the cytoplasm. It participates in secondary metabolite biosynthesis; terpenoid biosynthesis. The polypeptide is Terpenoid synthase 17 (TPS17) (Arabidopsis thaliana (Mouse-ear cress)).